Here is a 204-residue protein sequence, read N- to C-terminus: Protein GET1 (204 aa).

The Lumenal segment spans residues Met-1 to Leu-4. A helical transmembrane segment spans residues Leu-5–Thr-24. Topologically, residues Thr-25–Arg-110 are cytoplasmic. Residues Ala-72 to Thr-107 are a coiled coil. A helical transmembrane segment spans residues Thr-111 to Phe-131. At Trp-132–Ser-155 the chain is on the lumenal side. The chain crosses the membrane as a helical span at residues Val-156–Met-172. Topologically, residues Ile-173 to Ser-204 are cytoplasmic.

It belongs to the WRB/GET1 family. In terms of assembly, interacts with GET3.

It is found in the endoplasmic reticulum membrane. In terms of biological role, required for the post-translational delivery of tail-anchored (TA) proteins to the endoplasmic reticulum. Acts as a membrane receptor for soluble GET3, which recognizes and selectively binds the transmembrane domain of TA proteins in the cytosol. The sequence is that of Protein GET1 from Podospora anserina (strain S / ATCC MYA-4624 / DSM 980 / FGSC 10383) (Pleurage anserina).